The chain runs to 112 residues: MAALVREVVGDVLRGARMSQGRTLREVSDSARVSLGYLSEIERGRKEPSSELLSAICTALQLPLSVVLIDAGERMARQERLARATPAGRATGATIDASTKVVIAPVVSLAVA.

The HTH cro/C1-type domain occupies 13 to 67 (LRGARMSQGRTLREVSDSARVSLGYLSEIERGRKEPSSELLSAICTALQLPLSVV). The H-T-H motif DNA-binding region spans 24–43 (LREVSDSARVSLGYLSEIER).

Key stress-response regulator that plays an important role in multiple regulatory networks in response to different stress conditions. Required to manage host-derived stress during infection. Plays a role during hypoxia and reaeration. Controls the expression of many genes involved in heat shock, virulence, lipid metabolism, transport or regulation, including clpP1, clpP2, clpC1, hsp, groES, otsA, pknD, prcA and prcB. May function by protecting intracellular redox potential and by inducing the expression of trehalose, a constituent of cell walls that is important for defense against cell-surface and oxidative stress. Also performs different functions during stress response and is important for the pathogenicity of M.tuberculosis in vivo, regardless of the induction of the Clp proteolytic pathway. May directly activate SigE and/or SigH. This Mycobacterium tuberculosis (strain CDC 1551 / Oshkosh) protein is Transcriptional regulator ClgR (clgR).